The sequence spans 283 residues: ATP synthase gamma chain (283 aa).

This sequence belongs to the ATPase gamma chain family. In terms of assembly, F-type ATPases have 2 components, CF(1) - the catalytic core - and CF(0) - the membrane proton channel. CF(1) has five subunits: alpha(3), beta(3), gamma(1), delta(1), epsilon(1). CF(0) has three main subunits: a, b and c.

It is found in the cell membrane. Functionally, produces ATP from ADP in the presence of a proton gradient across the membrane. The gamma chain is believed to be important in regulating ATPase activity and the flow of protons through the CF(0) complex. This is ATP synthase gamma chain from Clostridium botulinum (strain Eklund 17B / Type B).